The primary structure comprises 29 residues: Small ribosomal subunit protein uS7 (29 aa).

The tract at residues 1–29 (ELIGAANRDTKSFSINRKDAKERVAKAAR) is disordered. Basic and acidic residues predominate over residues 8–29 (RDTKSFSINRKDAKERVAKAAR).

Belongs to the universal ribosomal protein uS7 family. Part of the 30S ribosomal subunit.

One of the primary rRNA binding proteins, it binds directly to 16S rRNA where it nucleates assembly of the head domain of the 30S subunit. Is located at the subunit interface close to the decoding center. The protein is Small ribosomal subunit protein uS7 (rps7) of Methanosarcina thermophila.